The sequence spans 367 residues: Homoserine O-acetyltransferase (367 aa).

The AB hydrolase-1 domain maps to 44–350; it reads NAILVTHAWT…AYGHDAFLLE (307 aa). Ser-150 acts as the Nucleophile in catalysis. Residue Arg-217 coordinates substrate. Catalysis depends on residues Asp-311 and His-344. Asp-345 lines the substrate pocket.

This sequence belongs to the AB hydrolase superfamily. MetX family. In terms of assembly, homodimer.

It localises to the cytoplasm. The enzyme catalyses L-homoserine + acetyl-CoA = O-acetyl-L-homoserine + CoA. Its pathway is amino-acid biosynthesis; L-methionine biosynthesis via de novo pathway; O-acetyl-L-homoserine from L-homoserine: step 1/1. Transfers an acetyl group from acetyl-CoA to L-homoserine, forming acetyl-L-homoserine. The sequence is that of Homoserine O-acetyltransferase from Citrifermentans bemidjiense (strain ATCC BAA-1014 / DSM 16622 / JCM 12645 / Bem) (Geobacter bemidjiensis).